Reading from the N-terminus, the 154-residue chain is Ribonuclease HI (154 aa).

The RNase H type-1 domain occupies 1-142 (MQKQIEIFTD…CDQLAKAGAE (142 aa)). Residues Asp-10, Glu-48, Asp-70, and Asp-134 each contribute to the Mg(2+) site.

Belongs to the RNase H family. In terms of assembly, monomer. The cofactor is Mg(2+).

The protein localises to the cytoplasm. It catalyses the reaction Endonucleolytic cleavage to 5'-phosphomonoester.. Functionally, endonuclease that specifically degrades the RNA of RNA-DNA hybrids. The chain is Ribonuclease HI (rnhA) from Pasteurella multocida (strain Pm70).